A 512-amino-acid polypeptide reads, in one-letter code: Putative ankyrin repeat protein FPV233 (512 aa).

ANK repeat units follow at residues 45 to 73 (IPFI…NVNQ), 77 to 106 (DDTY…QCSV), 136 to 168 (IQDI…DINM), 172 to 201 (HGNS…NPNI), 205 to 236 (TNKS…NTDP), 238 to 262 (LSHA…SINA), 266 to 296 (YGNT…DVNA), and 301 to 329 (RNLT…DINS).

The polypeptide is Putative ankyrin repeat protein FPV233 (Vertebrata (FPV)).